A 641-amino-acid polypeptide reads, in one-letter code: Leucine-rich repeat receptor-like serine/threonine/tyrosine-protein kinase SOBIR1 (641 aa).

Positions 1–31 (MAVPTGSANLFLRPLILAVLSFLLLSSFVSS) are cleaved as a signal peptide. Residues 32–284 (VEWLDIDSSD…KKKKSKKKKV (253 aa)) are Extracellular-facing. LRR repeat units lie at residues 112 to 133 (ELKE…DILS), 136 to 159 (QLEV…SSLS), 160 to 182 (RLRI…KNLR), 183 to 205 (NLEN…IVSF), and 207 to 228 (NLRF…VMSS). N-linked (GlcNAc...) asparagine glycosylation occurs at N154. N186 is a glycosylation site (N-linked (GlcNAc...) asparagine). The segment at 243–278 (AETPTSSPTNKPNNSTTSKAPKGAPKPGKLKKKKKK) is disordered. Positions 245 to 259 (TPTSSPTNKPNNSTT) are enriched in polar residues. An N-linked (GlcNAc...) asparagine glycan is attached at N256. Over residues 260 to 269 (SKAPKGAPKP) the composition is skewed to low complexity. The chain crosses the membrane as a helical span at residues 285–305 (AAWILGFVVGAIGGTISGFVF). Residues 306–641 (SVLFKLIIQA…VRTMLSQIKH (336 aa)) are Cytoplasmic-facing. The region spanning 347–641 (LASLEIIGRG…VRTMLSQIKH (295 aa)) is the Protein kinase domain. Residues 353–361 (IGRGGCGEV) and K377 contribute to the ATP site. D489 serves as the catalytic Proton acceptor.

The protein belongs to the protein kinase superfamily. Ser/Thr protein kinase family. As to quaternary structure, interacts with CST. Interacts with RLP23. Component of a trimeric complex composed of RLP23, SOBIR1 and BAK1. BAK1 is recruited into a pre-formed RLP23-SOBIR1 complex in a ligand-dependent manner. Autophosphorylated on Ser, Thr and Tyr residues. Mostly present in leaves and flowers, with increasing expression in older flowers.

It is found in the cell membrane. It catalyses the reaction L-seryl-[protein] + ATP = O-phospho-L-seryl-[protein] + ADP + H(+). It carries out the reaction L-threonyl-[protein] + ATP = O-phospho-L-threonyl-[protein] + ADP + H(+). The enzyme catalyses L-tyrosyl-[protein] + ATP = O-phospho-L-tyrosyl-[protein] + ADP + H(+). In terms of biological role, dual specificity kinase acting on both serine/threonine- and tyrosine-containing substrates. Acting as a counterplayer of BIR1, promotes the activation of plant defense and cell death. Component of the RLP23-SOBIR1-BAK1 complex that mediates NLP-triggered immunity. Functions as an inhibitor/regulator of abscission, probably by regulating membrane trafficking during abscission. In Arabidopsis thaliana (Mouse-ear cress), this protein is Leucine-rich repeat receptor-like serine/threonine/tyrosine-protein kinase SOBIR1 (SOBIR1).